The primary structure comprises 659 residues: Forkhead box protein P1-B (659 aa).

2 stretches are compositionally biased toward polar residues: residues 1–16 (MMQE…TAHQ) and 32–41 (KSTTPSSDIT). Disordered stretches follow at residues 1–41 (MMQE…SDIT) and 229–263 (ENSV…NGQY). The C2H2-type zinc-finger motif lies at 289–314 (GVCKWPGCEAVFEDFQSFLKHLNNEH). A leucine-zipper region spans residues 331 to 352 (VQQLELQLAKDKERLQAMMTHL). A CTBP1-binding region spans residues 365 to 369 (PLNLV). Residues 379–413 (PAASPPLSLPQTPTTPTAPLTPLSQTHSVITPTSL) are disordered. Low complexity predominate over residues 387 to 404 (LPQTPTTPTAPLTPLSQT). The segment at residues 448–538 (RPPFTYASLI…PQKISGSPAL (91 aa)) is a DNA-binding region (fork-head). A disordered region spans residues 590-659 (GAMDHGNSNG…EDDHGTEDML (70 aa)). Residues 595-605 (GNSNGSDSSPG) are compositionally biased toward polar residues. Positions 641–659 (PDFDHHRDYEDDHGTEDML) are enriched in basic and acidic residues.

As to expression, shows complex and dynamic expression during early embryonic development. Prominent in many regions of the developing central nervous system, particularly in midbrain-hindbrain boundary, hindbrain and spinal cord. Strongly expressed in the retina, ear, branchial arches, hatching gland, heart, pronephric duct, gut, proctodeum, pectoral fin and swim bladder.

It localises to the nucleus. In terms of biological role, transcriptional repressor. In Danio rerio (Zebrafish), this protein is Forkhead box protein P1-B (foxp1b).